The primary structure comprises 517 residues: FERM domain-containing protein 5 (517 aa).

One can recognise an FERM domain in the interval Y17–K298. Positions S308–P353 are interaction with ROCK1. A disordered region spans residues A344–T367. A Phosphoserine modification is found at S375. Disordered stretches follow at residues D385 to S408 and G485 to D517. Polar residues predominate over residues H388 to G398. Residues K498–D517 show a composition bias toward low complexity.

In terms of assembly, interacts with CTNND1, ITGB5 (via cytoplasmic domain) and ROCK1.

Its subcellular location is the cell junction. It localises to the adherens junction. In terms of biological role, may be involved in regulation of cell migration. May regulate cell-matrix interactions via its interaction with ITGB5 and modifying ITGB5 cytoplasmic tail interactions such as with FERMT2 and TLN1. May regulate ROCK1 kinase activity possibly involved in regulation of actin stress fiber formation. This is FERM domain-containing protein 5 (Frmd5) from Mus musculus (Mouse).